Consider the following 461-residue polypeptide: Tubulin gamma-1 chain (461 aa).

Residue 142–148 (AGGTGSG) coordinates GTP.

Belongs to the tubulin family.

It localises to the cytoplasm. Its subcellular location is the cytoskeleton. The protein resides in the microtubule organizing center. The protein localises to the centrosome. Tubulin is the major constituent of microtubules. The gamma chain is found at microtubule organizing centers (MTOC) such as the spindle poles or the centrosome, suggesting that it is involved in the minus-end nucleation of microtubule assembly. The protein is Tubulin gamma-1 chain of Euplotoides octocarinatus (Freshwater ciliate).